The sequence spans 138 residues: DNA-directed RNA polymerase subunit omega (138 aa).

The segment at 117–138 (NLLGRDNFFSTPENRNTSNTDS) is disordered. The span at 124–138 (FFSTPENRNTSNTDS) shows a compositional bias: polar residues.

This sequence belongs to the RNA polymerase subunit omega family. In terms of assembly, the RNAP catalytic core consists of 2 alpha, 1 beta, 1 beta' and 1 omega subunit. When a sigma factor is associated with the core the holoenzyme is formed, which can initiate transcription.

The catalysed reaction is RNA(n) + a ribonucleoside 5'-triphosphate = RNA(n+1) + diphosphate. Promotes RNA polymerase assembly. Latches the N- and C-terminal regions of the beta' subunit thereby facilitating its interaction with the beta and alpha subunits. This chain is DNA-directed RNA polymerase subunit omega, found in Ehrlichia canis (strain Jake).